The chain runs to 504 residues: Myocilin (504 aa).

Residues 1–32 form the signal peptide; the sequence is MRFFCARCCSFGPEMPAVQLLLLACLVWDVGA. Asn57 carries N-linked (GlcNAc...) asparagine glycosylation. Residues 74–184 are a coiled coil; that stretch reads LQRDSSTQRL…QEVARLRRGQ (111 aa). Disordered stretches follow at residues 106 to 131 and 170 to 200; these read QAAR…RDQL and LESS…PGSR. A compositionally biased stretch (basic and acidic residues) spans 122–131; that stretch reads GTLRRERDQL. The 260-residue stretch at 244 to 503 folds into the Olfactomedin-like domain; it reads GCGELVWVGE…MVTYDIKLSK (260 aa). Cys245 and Cys433 are joined by a disulfide. 5 residues coordinate Ca(2+): Asp380, Asn428, Ala429, Ile477, and Asp478. Positions 502–504 match the Microbody targeting signal motif; sequence SKM.

In terms of assembly, homodimer (via N-terminus). Can also form higher oligomers. Interacts with OLFM3, FN1, NRCAM, GLDN and NFASC. Interacts (via N-terminus) with MYL2. Interacts with SFRP1, FRZB, FZD7, FZD10, FZD1 and WIF1; regulates Wnt signaling. Interacts with SNTA1; regulates muscle hypertrophy. Interacts with ERBB2 and ERBB3; activates ERBB2-ERBB3 signaling pathway. Interacts with SNCG; affects its secretion and its aggregation. Different isoforms may arise by post-translational modifications. In terms of processing, glycosylated. Post-translationally, palmitoylated. Undergoes a calcium-dependent proteolytic cleavage at Arg-226 by CAPN2 in the endoplasmic reticulum. The result is the production of two fragments, one of 35 kDa containing the C-terminal olfactomedin-like domain, and another of 20 kDa containing the N-terminal leucine zipper-like domain. Detected in aqueous humor. Detected in the eye (at protein level). Widely expressed. Highly expressed in various types of muscle, ciliary body, papillary sphincter, skeletal muscle, heart, and bone marrow-derived mesenchymal stem cells. Expressed predominantly in the retina. In normal eyes, found in the inner uveal meshwork region and the anterior portion of the meshwork. In contrast, in many glaucomatous eyes, it is found in more regions of the meshwork and seems to be expressed at higher levels than in normal eyes, regardless of the type or clinical severity of glaucoma. The myocilin 35 kDa fragment is detected in aqueous humor and to a lesser extent in iris and ciliary body.

Its subcellular location is the secreted. It localises to the golgi apparatus. The protein resides in the cytoplasmic vesicle. It is found in the extracellular space. The protein localises to the extracellular matrix. Its subcellular location is the extracellular exosome. It localises to the mitochondrion. The protein resides in the mitochondrion intermembrane space. It is found in the mitochondrion inner membrane. The protein localises to the mitochondrion outer membrane. Its subcellular location is the rough endoplasmic reticulum. It localises to the cell projection. The protein resides in the cilium. It is found in the endoplasmic reticulum. Its function is as follows. Secreted glycoprotein regulating the activation of different signaling pathways in adjacent cells to control different processes including cell adhesion, cell-matrix adhesion, cytoskeleton organization and cell migration. Promotes substrate adhesion, spreading and formation of focal contacts. Negatively regulates cell-matrix adhesion and stress fiber assembly through Rho protein signal transduction. Modulates the organization of actin cytoskeleton by stimulating the formation of stress fibers through interactions with components of Wnt signaling pathways. Promotes cell migration through activation of PTK2 and the downstream phosphatidylinositol 3-kinase signaling. Plays a role in bone formation and promotes osteoblast differentiation in a dose-dependent manner through mitogen-activated protein kinase signaling. Mediates myelination in the peripheral nervous system through ERBB2/ERBB3 signaling. Plays a role as a regulator of muscle hypertrophy through the components of dystrophin-associated protein complex. Involved in positive regulation of mitochondrial depolarization. Plays a role in neurite outgrowth. May participate in the obstruction of fluid outflow in the trabecular meshwork. The chain is Myocilin (MYOC) from Homo sapiens (Human).